The following is a 246-amino-acid chain: MSSQPLNVNEDEIAKFEQVASQWWDLTGDFKPLHQINPLRVQFISQHIALQVEGIDSKNGFYDMQIIDVGCGGGILSESLAKLGANVTGIDMGTEPLNVAKLHALETGVSINYQKITAEEKALENPGTFDVVTCMEMLEHVPDPASVIQACSTLVKPGGLIFFSTLNKSIKSYLLAILAAEKLLKIVPDGTHDHDKFIRPSQLIGWAEEHGLKCIDASGIHYNPITGNHKLNDSLDVNYILCCRKL.

Positions 40, 70, 91, and 135 each coordinate S-adenosyl-L-methionine.

This sequence belongs to the methyltransferase superfamily. UbiG/COQ3 family.

It carries out the reaction a 3-demethylubiquinol + S-adenosyl-L-methionine = a ubiquinol + S-adenosyl-L-homocysteine + H(+). The catalysed reaction is a 3-(all-trans-polyprenyl)benzene-1,2-diol + S-adenosyl-L-methionine = a 2-methoxy-6-(all-trans-polyprenyl)phenol + S-adenosyl-L-homocysteine + H(+). It participates in cofactor biosynthesis; ubiquinone biosynthesis. In terms of biological role, O-methyltransferase that catalyzes the 2 O-methylation steps in the ubiquinone biosynthetic pathway. The sequence is that of Ubiquinone biosynthesis O-methyltransferase from Colwellia psychrerythraea (strain 34H / ATCC BAA-681) (Vibrio psychroerythus).